A 112-amino-acid chain; its full sequence is ATP synthase epsilon chain (112 aa).

Belongs to the ATPase epsilon chain family. In terms of assembly, F-type ATPases have 2 components, CF(1) - the catalytic core - and CF(0) - the membrane proton channel. CF(1) has five subunits: alpha(3), beta(3), gamma(1), delta(1), epsilon(1). CF(0) has three main subunits: a, b and c.

It localises to the cell inner membrane. In terms of biological role, produces ATP from ADP in the presence of a proton gradient across the membrane. The sequence is that of ATP synthase epsilon chain (atpC) from Rickettsia conorii (strain ATCC VR-613 / Malish 7).